The primary structure comprises 309 residues: Methionyl-tRNA formyltransferase (309 aa).

109 to 112 (SLLP) is a (6S)-5,6,7,8-tetrahydrofolate binding site.

This sequence belongs to the Fmt family.

It carries out the reaction L-methionyl-tRNA(fMet) + (6R)-10-formyltetrahydrofolate = N-formyl-L-methionyl-tRNA(fMet) + (6S)-5,6,7,8-tetrahydrofolate + H(+). In terms of biological role, attaches a formyl group to the free amino group of methionyl-tRNA(fMet). The formyl group appears to play a dual role in the initiator identity of N-formylmethionyl-tRNA by promoting its recognition by IF2 and preventing the misappropriation of this tRNA by the elongation apparatus. In Clostridium perfringens (strain SM101 / Type A), this protein is Methionyl-tRNA formyltransferase.